The following is a 521-amino-acid chain: GMP synthase [glutamine-hydrolyzing] (521 aa).

In terms of domain architecture, Glutamine amidotransferase type-1 spans 8–203 (KILILDFGAQ…VVDICGCQTL (196 aa)). Catalysis depends on Cys85, which acts as the Nucleophile. Residues His177 and Glu179 contribute to the active site. The GMPS ATP-PPase domain maps to 204-396 (WTAANIIDDQ…LGLPRTMVYR (193 aa)). 231 to 237 (SGGVDSS) is a binding site for ATP.

As to quaternary structure, homodimer.

The catalysed reaction is XMP + L-glutamine + ATP + H2O = GMP + L-glutamate + AMP + diphosphate + 2 H(+). It functions in the pathway purine metabolism; GMP biosynthesis; GMP from XMP (L-Gln route): step 1/1. Functionally, catalyzes the synthesis of GMP from XMP. The polypeptide is GMP synthase [glutamine-hydrolyzing] (Xanthomonas oryzae pv. oryzae (strain MAFF 311018)).